The chain runs to 383 residues: Lipid-A-disaccharide synthase (383 aa).

This sequence belongs to the LpxB family.

The enzyme catalyses a lipid X + a UDP-2-N,3-O-bis[(3R)-3-hydroxyacyl]-alpha-D-glucosamine = a lipid A disaccharide + UDP + H(+). Its pathway is bacterial outer membrane biogenesis; LPS lipid A biosynthesis. Its function is as follows. Condensation of UDP-2,3-diacylglucosamine and 2,3-diacylglucosamine-1-phosphate to form lipid A disaccharide, a precursor of lipid A, a phosphorylated glycolipid that anchors the lipopolysaccharide to the outer membrane of the cell. In Aliivibrio fischeri (strain ATCC 700601 / ES114) (Vibrio fischeri), this protein is Lipid-A-disaccharide synthase.